Consider the following 1039-residue polypeptide: Kinesin-like protein KIN-5B (1039 aa).

In terms of domain architecture, Kinesin motor spans 48 to 390; sequence NVQVILRCKP…LDYAYRAKNI (343 aa). ATP is bound at residue 134–141; the sequence is GQTGTGKT. Positions 1008 to 1039 are disordered; it reads TLSEEHTSLEKISTKQGLGEANNRTPFLEVNK. Residues 1010 to 1020 show a composition bias toward basic and acidic residues; sequence SEEHTSLEKIS.

Belongs to the TRAFAC class myosin-kinesin ATPase superfamily. Kinesin family. KIN-5/BimC subfamily.

The protein resides in the cytoplasm. Its subcellular location is the cytoskeleton. It is found in the spindle. Responsible for microtubule translocation. May be important for the organization of phragmoplast-specific arrays of microtubules. Plays an essential role in stabilizing the mitotic spindle. Required during mitotic cytokinesis. The chain is Kinesin-like protein KIN-5B from Arabidopsis thaliana (Mouse-ear cress).